A 305-amino-acid chain; its full sequence is Ribosomal protein L11 methyltransferase (305 aa).

Residues Thr155, Gly176, Asp198, and Asn241 each coordinate S-adenosyl-L-methionine.

It belongs to the methyltransferase superfamily. PrmA family.

The protein resides in the cytoplasm. The catalysed reaction is L-lysyl-[protein] + 3 S-adenosyl-L-methionine = N(6),N(6),N(6)-trimethyl-L-lysyl-[protein] + 3 S-adenosyl-L-homocysteine + 3 H(+). In terms of biological role, methylates ribosomal protein L11. This chain is Ribosomal protein L11 methyltransferase, found in Carboxydothermus hydrogenoformans (strain ATCC BAA-161 / DSM 6008 / Z-2901).